The sequence spans 838 residues: Serine/threonine-protein phosphatase 4 regulatory subunit 3 (838 aa).

2 disordered regions span residues 452–482 (NNCN…SPSR) and 745–838 (AINK…SESS). Residues 747-761 (NKQQDNNGERNTTTG) show a composition bias toward polar residues. Residues 783 to 792 (SDGENNENNE) show a composition bias toward acidic residues.

As to quaternary structure, regulatory subunit 3 (R3) of the histone H2A phosphatase complex (HTP-C) consisting of PPH3, PSY2 and PSY4.

The protein localises to the nucleus. Core regulatory subunit of the histone H2A phosphatase complex, which dephosphorylates H2AS128ph (gamma-H2A) that has been displaced from sites of DNA lesions in the double-stranded DNA break repair process. Dephosphorylation is necessary for efficient recovery from the DNA damage checkpoint. This is Serine/threonine-protein phosphatase 4 regulatory subunit 3 (PSY2) from Eremothecium gossypii (strain ATCC 10895 / CBS 109.51 / FGSC 9923 / NRRL Y-1056) (Yeast).